A 475-amino-acid polypeptide reads, in one-letter code: Aspartyl/glutamyl-tRNA(Asn/Gln) amidotransferase subunit B (475 aa).

Belongs to the GatB/GatE family. GatB subfamily. In terms of assembly, heterotrimer of A, B and C subunits.

The enzyme catalyses L-glutamyl-tRNA(Gln) + L-glutamine + ATP + H2O = L-glutaminyl-tRNA(Gln) + L-glutamate + ADP + phosphate + H(+). It carries out the reaction L-aspartyl-tRNA(Asn) + L-glutamine + ATP + H2O = L-asparaginyl-tRNA(Asn) + L-glutamate + ADP + phosphate + 2 H(+). In terms of biological role, allows the formation of correctly charged Asn-tRNA(Asn) or Gln-tRNA(Gln) through the transamidation of misacylated Asp-tRNA(Asn) or Glu-tRNA(Gln) in organisms which lack either or both of asparaginyl-tRNA or glutaminyl-tRNA synthetases. The reaction takes place in the presence of glutamine and ATP through an activated phospho-Asp-tRNA(Asn) or phospho-Glu-tRNA(Gln). In Pelodictyon phaeoclathratiforme (strain DSM 5477 / BU-1), this protein is Aspartyl/glutamyl-tRNA(Asn/Gln) amidotransferase subunit B.